The chain runs to 492 residues: Catalase isozyme 1 (492 aa).

Residues His65 and Asn138 contribute to the active site. Tyr348 is a binding site for heme.

This sequence belongs to the catalase family. In terms of assembly, homotetramer. Heme is required as a cofactor.

It is found in the peroxisome. The protein localises to the glyoxysome. It carries out the reaction 2 H2O2 = O2 + 2 H2O. In terms of biological role, occurs in almost all aerobically respiring organisms and serves to protect cells from the toxic effects of hydrogen peroxide. This chain is Catalase isozyme 1 (CAT1), found in Solanum tuberosum (Potato).